The chain runs to 102 residues: MEHVNEILATVGVILQQTQTTQDVNASAKLGAYIGAGVTMIAGSTVGIGQGYIFGKAVEAIARNPEVEKQVFKLIFIGSAVSESTAIYGLLISFILIFVAGA.

2 helical membrane-spanning segments follow: residues 34–54 (IGAG…GYIF) and 80–100 (AVSE…IFVA).

The protein belongs to the ATPase C chain family. In terms of assembly, F-type ATPases have 2 components, F(1) - the catalytic core - and F(0) - the membrane proton channel. F(1) has five subunits: alpha(3), beta(3), gamma(1), delta(1), epsilon(1). F(0) has three main subunits: a(1), b(2) and c(10-14). The alpha and beta chains form an alternating ring which encloses part of the gamma chain. F(1) is attached to F(0) by a central stalk formed by the gamma and epsilon chains, while a peripheral stalk is formed by the delta and b chains.

Its subcellular location is the cell membrane. Its function is as follows. F(1)F(0) ATP synthase produces ATP from ADP in the presence of a proton or sodium gradient. F-type ATPases consist of two structural domains, F(1) containing the extramembraneous catalytic core and F(0) containing the membrane proton channel, linked together by a central stalk and a peripheral stalk. During catalysis, ATP synthesis in the catalytic domain of F(1) is coupled via a rotary mechanism of the central stalk subunits to proton translocation. Functionally, key component of the F(0) channel; it plays a direct role in translocation across the membrane. A homomeric c-ring of between 10-14 subunits forms the central stalk rotor element with the F(1) delta and epsilon subunits. The chain is ATP synthase subunit c from Mycoplasma genitalium (strain ATCC 33530 / DSM 19775 / NCTC 10195 / G37) (Mycoplasmoides genitalium).